We begin with the raw amino-acid sequence, 377 residues long: MTQEPFREELAYDRMPTLERGRQDPASYAPDTKPSDLQLSKRLPPCFSPKTWVFSVLMGSCLLVTSGFSLYLGNVFPAEMDYLRCAAGSCIPSAIVSFTVSRRNANVIPNFQILFVSTFAVTTTCLIWFGCKLILNPSAININFNLILLLLLELLMAATVIMSARSSEEYCKKKKGSMSDGTNILGEVPFPARVLKSYSVVEVIAGISAVLGGIIALNVDDSVSGPHLSVTFFWILVACFPSAIASHVTAECPSKCLVEVLIAISSLTSPLLFTASGYLSFSVMRIVEMFKDYPPAIKPSYDVLLLLLLLVLLLQAGLNTGTAIQCVRFKVSARLQGASWDTQSGPQERLAGEVARSPLKEFDKEKAWRAVVVQMAQ.

The span at 1-23 shows a compositional bias: basic and acidic residues; sequence MTQEPFREELAYDRMPTLERGRQ. The segment at 1–37 is disordered; it reads MTQEPFREELAYDRMPTLERGRQDPASYAPDTKPSDL. A run of 4 helical transmembrane segments spans residues 52-72, 82-100, 111-131, and 142-162; these read WVFSVLMGSCLLVTSGFSLYL, YLRCAAGSCIPSAIVSFTV, FQILFVSTFAVTTTCLIWFGC, and INFNLILLLLLELLMAATVIM. Phosphoserine occurs at positions 177 and 179. 4 helical membrane passes run 199–219, 228–248, 257–277, and 304–324; these read SVVEVIAGISAVLGGIIALNV, LSVTFFWILVACFPSAIASHV, LVEVLIAISSLTSPLLFTASG, and LLLLLLLVLLLQAGLNTGTAI.

As to quaternary structure, interacts with ATP1B1. Part of a complex containing ATP1B1, TRPV4, AQP4 and HEPACAM.

It localises to the membrane. The protein resides in the cell membrane. It is found in the cytoplasm. The protein localises to the perinuclear region. Its subcellular location is the endoplasmic reticulum. In terms of biological role, transmembrane protein mainly expressed in brain astrocytes that may play a role in transport across the blood-brain and brain-cerebrospinal fluid barriers. Regulates the response of astrocytes to hypo-osmosis by promoting calcium influx. May function as regulatory protein of membrane protein complexes such as ion channels. The sequence is that of Membrane protein MLC1 (MLC1) from Macaca fascicularis (Crab-eating macaque).